The following is a 347-amino-acid chain: NADH-quinone oxidoreductase subunit H (347 aa).

8 helical membrane passes run 13 to 33, 82 to 102, 115 to 135, 161 to 181, 198 to 218, 248 to 268, 283 to 303, and 321 to 341; these read LLIL…VAYI, GVFL…WAVI, VGIL…IMGG, IGFV…SDIV, FLDW…ISAL, FLLF…LATI, FTWV…FFGI, and LGWK…AAFL.

The protein belongs to the complex I subunit 1 family. As to quaternary structure, NDH-1 is composed of 14 different subunits. Subunits NuoA, H, J, K, L, M, N constitute the membrane sector of the complex.

It is found in the cell inner membrane. It carries out the reaction a quinone + NADH + 5 H(+)(in) = a quinol + NAD(+) + 4 H(+)(out). Its function is as follows. NDH-1 shuttles electrons from NADH, via FMN and iron-sulfur (Fe-S) centers, to quinones in the respiratory chain. The immediate electron acceptor for the enzyme in this species is believed to be ubiquinone. Couples the redox reaction to proton translocation (for every two electrons transferred, four hydrogen ions are translocated across the cytoplasmic membrane), and thus conserves the redox energy in a proton gradient. This subunit may bind ubiquinone. The polypeptide is NADH-quinone oxidoreductase subunit H (Mesorhizobium japonicum (strain LMG 29417 / CECT 9101 / MAFF 303099) (Mesorhizobium loti (strain MAFF 303099))).